Consider the following 399-residue polypeptide: MQIYLGITICLVAFLTVIDCAIPYYRTHSNFGSLGRRKVRQVQRDLTYRWPNNTVPYYVGNVTSTIKKSVRLAIEELQAWTCIRFQNVNEKYSDGDSVRIVDLGSCSSPIGRQQIGTQDVSLTKNCWGMGTAIHELMHAIGIEHTQSRSDRNRYLDILAQNIDNRDLPNFELLSPRLWANLVPYDYGSVMHYSADSFSNKDDEQTMLPKDRSFIETMGSMIPNFYDFDQINQYYQCYDSCRNAGQLANCANGGIPNPNNCQVCNCPMGYGGDLCDQRPEGCGSTLVATDRWQKQKLSVRFSRNDDQYFTFCNSWIVGPSDRTLQVIYEITSDSIRRQICSFGCYEGGIEVKHLQDPRITNDRDCCLNTPLNLTTTVNPLPVILYTSGATVTYDFSYRYV.

The N-terminal stretch at 1–20 (MQIYLGITICLVAFLTVIDC) is a signal peptide. Positions 41-237 (QVQRDLTYRW…DQINQYYQCY (197 aa)) constitute a Peptidase M12A domain. N-linked (GlcNAc...) asparagine glycosylation is found at N52 and N61. 4 disulfides stabilise this stretch: C82/C236, C106/C126, C240/C260, and C265/C274. H134 contacts Zn(2+). Residue E135 is part of the active site. Zn(2+) contacts are provided by H138 and H144. The 44-residue stretch at 232–275 (QYYQCYDSCRNAGQLANCANGGIPNPNNCQVCNCPMGYGGDLCD) folds into the EGF-like domain. An N-linked (GlcNAc...) asparagine glycan is attached at N371.

Zn(2+) is required as a cofactor. In terms of tissue distribution, expressed in pharyngeal muscles, pharyngeal-intestinal valve, rectal gland cells and arcade cells.

It localises to the secreted. In terms of biological role, metalloprotease. The protein is Zinc metalloproteinase nas-25 (nas-25) of Caenorhabditis elegans.